A 241-amino-acid polypeptide reads, in one-letter code: Outer membrane protein assembly factor BamD (241 aa).

The first 17 residues, 1-17, serve as a signal peptide directing secretion; sequence MKYQTLSGLLALSLLFG. A lipid anchor (N-palmitoyl cysteine) is attached at cysteine 18. A lipid anchor (S-diacylglycerol cysteine) is attached at cysteine 18.

The protein belongs to the BamD family. Part of the Bam complex.

It is found in the cell outer membrane. Its function is as follows. Part of the outer membrane protein assembly complex, which is involved in assembly and insertion of beta-barrel proteins into the outer membrane. In Vibrio cholerae serotype O1 (strain ATCC 39315 / El Tor Inaba N16961), this protein is Outer membrane protein assembly factor BamD.